A 204-amino-acid chain; its full sequence is Large ribosomal subunit protein bL25 (204 aa).

Belongs to the bacterial ribosomal protein bL25 family. CTC subfamily. As to quaternary structure, part of the 50S ribosomal subunit; part of the 5S rRNA/L5/L18/L25 subcomplex. Contacts the 5S rRNA. Binds to the 5S rRNA independently of L5 and L18.

Functionally, this is one of the proteins that binds to the 5S RNA in the ribosome where it forms part of the central protuberance. In Pseudomonas aeruginosa (strain LESB58), this protein is Large ribosomal subunit protein bL25.